The primary structure comprises 201 residues: Peptide deformylase (201 aa).

Residues Cys-114 and His-156 each coordinate Fe cation. Residue Glu-157 is part of the active site. His-160 serves as a coordination point for Fe cation.

It belongs to the polypeptide deformylase family. Requires Fe(2+) as cofactor.

It catalyses the reaction N-terminal N-formyl-L-methionyl-[peptide] + H2O = N-terminal L-methionyl-[peptide] + formate. Functionally, removes the formyl group from the N-terminal Met of newly synthesized proteins. Requires at least a dipeptide for an efficient rate of reaction. N-terminal L-methionine is a prerequisite for activity but the enzyme has broad specificity at other positions. The chain is Peptide deformylase from Tropheryma whipplei (strain TW08/27) (Whipple's bacillus).